The chain runs to 786 residues: MWIQVRTMDGKVAHTVDSLSRLTKVEELRKKIQELFHVEPGLQRLFYRGKQMEDGHTLFDYDVRLNDTIQLLVRQSLVLPVPVPSSSGGSKERDSELSDTDSGCGLAQSESDKSSNSGEAANEPEGKADEDECDETELGLYKVGEYVDARDTNMGAWFEAKVIRVTRKAPAHDQPSSSSSKPEDDIIYHVTYDDYPENGVVQMTSQNVRARARHTIKWEDLQVGQVVMVNYNPDLPKDRGFWYDAEILRKRETRTARELHANVRIGGDSLNDCRIVFVDEVFKIERPGEGNPMVENPMRRKSGPSCKHCKDDERKLCRMCACHVCGGKQDPDKQLMCDECDMAFHIYCLRPPLSSVPPEEEWYCPDCRIDSSEVVQAGEKLKESKKKAKMASATSSSQRDWGKGMACVGRTKECTIVPSNHFGPIPGIPVGTMWRFRVQVSESGVHRPHVAGIHGRSNHGAYSLVLAGGYEDDVDHGNSFTYTGSGGRDLSGNKRTAEQSCDQKLTNTNRALALNCFAPINDLKGAEAKDWRSGKPVRVVRNVKGRKHSKYAPIEGNRYDGIYKVVRYWPEKGKSGFLVWRFLLRRDDVEPGPWTKEGKDRIKKLGLTMQYPEGYLEALARKEKENSKQAALDKEEEDGEEGFTSPRKGKRKSKSAGGDGSSRGTPKKTKVEPYSLTTQQSSLIKEDKSNMKLWTEILKSLKDGPKFLSKVEETFQCICCQELVFRPITTVCQHNVCKDCLDRSFKAQVFSCPACRYDLGRSYAMTVNQPLQAVLSQLFPGYGSGR.

In terms of domain architecture, Ubiquitin-like spans 1–78 (MWIQVRTMDG…IQLLVRQSLV (78 aa)). Phosphoserine is present on residues serine 76, serine 98, and serine 102. The disordered stretch occupies residues 82-134 (PVPSSSGGSKERDSELSDTDSGCGLAQSESDKSSNSGEAANEPEGKADEDECD). Tudor-like regions lie at residues 139–213 (GLYK…ARAR) and 220–287 (DLQV…IERP). Residue lysine 283 forms a Glycyl lysine isopeptide (Lys-Gly) (interchain with G-Cter in SUMO2) linkage. Positions 300 to 305 (RKSGPS) are linker. Residue serine 302 is modified to Phosphoserine; by PKA. The PHD-type zinc finger occupies 303–370 (GPSCKHCKDD…EWYCPDCRID (68 aa)). Histone H3R2me0 binding stretches follow at residues 337 to 341 (CDECD) and 357 to 359 (PPE). Phosphoserine is present on serine 372. Lysine 389 is covalently cross-linked (Glycyl lysine isopeptide (Lys-Gly) (interchain with G-Cter in SUMO2)). N6-acetyllysine is present on lysine 403. One can recognise a YDG domain in the interval 423–586 (GPIPGIPVGT…FLVWRFLLRR (164 aa)). Residues 449-450 (HV) form a required to promote base flipping region. DNA-binding positions include 467–468 (AG) and aspartate 473. 2 required for formation of a 5-methylcytosine-binding pocket regions span residues 470–473 (YEDD) and 482–485 (YTGS). An N6-acetyllysine; alternate modification is found at lysine 550. A Glycyl lysine isopeptide (Lys-Gly) (interchain with G-Cter in SUMO2); alternate cross-link involves residue lysine 550. Residues 626–679 (NSKQAALDKEEEDGEEGFTSPRKGKRKSKSAGGDGSSRGTPKKTKVEPYSLTTQ) form a disordered region. Residue serine 645 is modified to Phosphoserine; by CDK1. Residues serine 655 and serine 662 each carry the phosphoserine modification. Residue lysine 670 forms a Glycyl lysine isopeptide (Lys-Gly) (interchain with G-Cter in SUMO2) linkage. An RING-type zinc finger spans residues 717-756 (CICCQELVFRPITTVCQHNVCKDCLDRSFKAQVFSCPACR).

In terms of assembly, interacts with DNMT3A and DNMT3B. Interacts with DNMT1; the interaction is direct. Interacts with USP7; leading to its deubiquitination. Interacts with histone H3. Interacts with HDAC1, but not with HDAC2. Interacts with BLTP3A. Interacts with PML. Interacts with EHMT2. Binds methylated CpG containing oligonucleotides. Interacts with ZNF263; recruited to the SIX3 promoter along with other proteins involved in chromatin modification and transcriptional corepression where it contributes to transcriptional repression. Interacts with UHRF2. Interacts with FANCD2. Interacts with TET1 isoform 2; this interaction induces the recruitment of TET1 isoform 2 to replicating heterochromatin. Post-translationally, phosphorylation at Ser-302 of the linker region decreases the binding to H3K9me3. Phosphorylation at Ser-645 by CDK1 during M phase impairs interaction with USP7, preventing deubiquitination and leading to degradation by the proteasome. In terms of processing, ubiquitinated; which leads to proteasomal degradation. Autoubiquitinated; interaction with USP7 leads to deubiquitination and prevents degradation. Ubiquitination and degradation takes place during M phase, when phosphorylation at Ser-645 prevents interaction with USP7 and subsequent deubiquitination. Polyubiquitination may be stimulated by DNA damage.

It localises to the nucleus. It carries out the reaction S-ubiquitinyl-[E2 ubiquitin-conjugating enzyme]-L-cysteine + [acceptor protein]-L-lysine = [E2 ubiquitin-conjugating enzyme]-L-cysteine + N(6)-ubiquitinyl-[acceptor protein]-L-lysine.. Its pathway is protein modification; protein ubiquitination. In terms of biological role, multidomain protein that acts as a key epigenetic regulator by bridging DNA methylation and chromatin modification. Specifically recognizes and binds hemimethylated DNA at replication forks via its YDG domain and recruits DNMT1 methyltransferase to ensure faithful propagation of the DNA methylation patterns through DNA replication. In addition to its role in maintenance of DNA methylation, also plays a key role in chromatin modification: through its tudor-like regions and PHD-type zinc fingers, specifically recognizes and binds histone H3 trimethylated at 'Lys-9' (H3K9me3) and unmethylated at 'Arg-2' (H3R2me0), respectively, and recruits chromatin proteins. Enriched in pericentric heterochromatin where it recruits different chromatin modifiers required for this chromatin replication. Also localizes to euchromatic regions where it negatively regulates transcription possibly by impacting DNA methylation and histone modifications. Has E3 ubiquitin-protein ligase activity by mediating the ubiquitination of target proteins such as histone H3 and PML. It is still unclear how E3 ubiquitin-protein ligase activity is related to its role in chromatin in vivo. Plays a role in DNA repair by cooperating with UHRF2 to ensure recruitment of FANCD2 to interstrand cross-links (ICLs) leading to FANCD2 activation. Plays a pivotal role in the establishment of correct spindle architecture by catalyzing the 'Lys-63'-linked ubiquitination of KIF11, thereby controlling KIF11 localization on the spindle. This is E3 ubiquitin-protein ligase UHRF1 (UHRF1) from Bos taurus (Bovine).